Consider the following 310-residue polypeptide: Olfactory receptor 2A7 (310 aa).

At 1–24 the chain is on the extracellular side; sequence MGDNITSITEFLLLGFPVGPRIQM. Residue Asn-4 is glycosylated (N-linked (GlcNAc...) asparagine). A helical membrane pass occupies residues 25 to 48; the sequence is LLFGLFSLFYVFTLLGNGTILGLI. The Cytoplasmic portion of the chain corresponds to 49-56; it reads SLDSRLHA. The chain crosses the membrane as a helical span at residues 57-78; that stretch reads PMYFFLSHLAVVDIAYACNTVP. Topologically, residues 79 to 99 are extracellular; the sequence is RMLVNLLHPAKPISFAGRMMQ. The chain crosses the membrane as a helical span at residues 100-119; it reads TFLFSTFAVTECLLLVVMSY. The Cytoplasmic portion of the chain corresponds to 120–138; the sequence is DLYVAICHPLRYLAIMTWR. Residues 139–157 traverse the membrane as a helical segment; sequence VCITLAVTSWTTGVLLSLI. Topologically, residues 158–194 are extracellular; sequence HLVLLLPLPFCRPQKIYHFFCEILAVLKLACADTHIN. The chain crosses the membrane as a helical span at residues 195 to 218; it reads ENMVLAGAISGLVGPLSTIVVSYM. Residues 219 to 235 lie on the Cytoplasmic side of the membrane; the sequence is CILCAILQIQSREVQRK. Residues 236-258 traverse the membrane as a helical segment; sequence AFCTCFSHLCVIGLFYGTAIIMY. At 259-271 the chain is on the extracellular side; that stretch reads VGPRYGNPKEQKK. A helical membrane pass occupies residues 272-291; sequence YLLLFHSLFNPMLNPLICSL. Residues 292 to 310 are Cytoplasmic-facing; that stretch reads RNSEVKNTLKRVLGVERAL.

The protein belongs to the G-protein coupled receptor 1 family.

It is found in the cell membrane. Functionally, odorant receptor. This chain is Olfactory receptor 2A7 (OR2A7), found in Homo sapiens (Human).